The following is a 262-amino-acid chain: Histone chaperone cia1 (262 aa).

Residues isoleucine 157 to glutamine 262 form a disordered region. Coiled-coil stretches lie at residues aspartate 173–glycine 196 and lysine 223–lysine 253. Composition is skewed to acidic residues over residues aspartate 173–glutamate 219 and glutamate 226–serine 242. The segment covering alanine 250 to glutamine 262 has biased composition (basic and acidic residues).

It belongs to the ASF1 family. In terms of assembly, interacts with histone H3 and histone H4.

The protein localises to the nucleus. Functionally, histone chaperone that facilitates histone deposition and histone exchange and removal during nucleosome assembly and disassembly. The protein is Histone chaperone cia1 (cia1) of Schizosaccharomyces pombe (strain 972 / ATCC 24843) (Fission yeast).